Reading from the N-terminus, the 277-residue chain is Carbonyl reductase [NADPH] 3 (277 aa).

Ser-2 is subject to N-acetylserine. Residues 10 to 34 (VTGA…GDVV), 38 to 42 (RDEAR), 63 to 64 (DI), and Asn-90 contribute to the NADP(+) site. Ser-30 is subject to Phosphoserine. A substrate-binding site is contributed by Ser-140. Catalysis depends on Tyr-194, which acts as the Proton acceptor. 194 to 198 (YGVSK) serves as a coordination point for NADP(+).

Belongs to the short-chain dehydrogenases/reductases (SDR) family.

The protein localises to the cytoplasm. The enzyme catalyses a secondary alcohol + NADP(+) = a ketone + NADPH + H(+). It carries out the reaction a quinone + NADPH + H(+) = a quinol + NADP(+). Its function is as follows. Catalyzes the NADPH-dependent reduction of carbonyl compounds to their corresponding alcohols. Has low NADPH-dependent oxidoreductase activity. Acts on several orthoquinones, as well as on non-quinone compounds, such as isatin or on the anticancer drug oracin. Best substrates for CBR3 is 1,2- naphthoquinone, hence could play a role in protection against cytotoxicity of exogenous quinones. Exerts activity toward ortho-quinones but not paraquinones. No endogenous substrate for CBR3 except isatin has been identified. The polypeptide is Carbonyl reductase [NADPH] 3 (Rattus norvegicus (Rat)).